The sequence spans 115 residues: Macrophage migration inhibitory factor (115 aa).

Residue P2 is the Proton acceptor; via imino nitrogen of the active site. 2 residues coordinate substrate: K33 and I65. K78 bears the N6-acetyllysine; alternate mark. Residue K78 is modified to N6-succinyllysine; alternate. N98 is a binding site for substrate.

The protein belongs to the MIF family. In terms of assembly, homotrimer. Interacts with CD74 and CXCR2 extracellular domain and COPS5. Interacts with the USO1 and BNIPL.

It localises to the secreted. It is found in the cytoplasm. The catalysed reaction is 3-phenylpyruvate = enol-phenylpyruvate. It carries out the reaction L-dopachrome = 5,6-dihydroxyindole-2-carboxylate. In terms of biological role, pro-inflammatory cytokine involved in the innate immune response to bacterial pathogens. The expression of MIF at sites of inflammation suggests a role as mediator in regulating the function of macrophages in host defense. Counteracts the anti-inflammatory activity of glucocorticoids. Has phenylpyruvate tautomerase and dopachrome tautomerase activity (in vitro), but the physiological substrate is not known. It is not clear whether the tautomerase activity has any physiological relevance, and whether it is important for cytokine activity. This chain is Macrophage migration inhibitory factor, found in Mus musculus (Mouse).